The sequence spans 481 residues: 2-succinylbenzoate--CoA ligase (481 aa).

The protein belongs to the ATP-dependent AMP-binding enzyme family. MenE subfamily.

The catalysed reaction is 2-succinylbenzoate + ATP + CoA = 2-succinylbenzoyl-CoA + AMP + diphosphate. Its pathway is quinol/quinone metabolism; 1,4-dihydroxy-2-naphthoate biosynthesis; 1,4-dihydroxy-2-naphthoate from chorismate: step 5/7. The protein operates within quinol/quinone metabolism; menaquinone biosynthesis. In terms of biological role, converts 2-succinylbenzoate (OSB) to 2-succinylbenzoyl-CoA (OSB-CoA). The sequence is that of 2-succinylbenzoate--CoA ligase from Bacillus cereus (strain Q1).